Here is a 130-residue protein sequence, read N- to C-terminus: Lysozyme C (130 aa).

Residues 1–130 (KTYERCELAR…VSPWIRDCGL (130 aa)) enclose the C-type lysozyme domain. Cystine bridges form between C6–C128, C30–C116, C65–C81, and C77–C95. Catalysis depends on residues E35 and D53.

It belongs to the glycosyl hydrolase 22 family. In terms of assembly, monomer.

It is found in the secreted. It catalyses the reaction Hydrolysis of (1-&gt;4)-beta-linkages between N-acetylmuramic acid and N-acetyl-D-glucosamine residues in a peptidoglycan and between N-acetyl-D-glucosamine residues in chitodextrins.. Lysozymes have primarily a bacteriolytic function; those in tissues and body fluids are associated with the monocyte-macrophage system and enhance the activity of immunoagents. This Chelonia mydas (Green sea-turtle) protein is Lysozyme C (LYZ).